We begin with the raw amino-acid sequence, 327 residues long: Secondary metabolism regulator LAE1 (327 aa).

It belongs to the methyltransferase superfamily. LaeA methyltransferase family.

Its subcellular location is the nucleus. The catalysed reaction is L-methionyl-[protein] + S-adenosyl-L-methionine = S-methyl-L-methionyl-[protein] + S-adenosyl-L-homocysteine. Secondary metabolism regulator that controls the expression of the tenuazonic acid biosynthesis cluster. Methyltransferase that performs automethylation. No other methyl-accepting substrate has been identified yet. This is Secondary metabolism regulator LAE1 from Pyricularia oryzae (strain 70-15 / ATCC MYA-4617 / FGSC 8958) (Rice blast fungus).